The chain runs to 264 residues: Thiamine pyrophosphokinase 1 (264 aa).

Over residues 1-12 (MPLPTMTHSSSF) the composition is skewed to polar residues. Positions 1–27 (MPLPTMTHSSSFLRLPATSSPHPPPAD) are disordered.

The protein belongs to the thiamine pyrophosphokinase family.

Its subcellular location is the cytoplasm. It localises to the cytosol. The enzyme catalyses thiamine + ATP = thiamine diphosphate + AMP + H(+). It functions in the pathway cofactor biosynthesis; thiamine diphosphate biosynthesis; thiamine diphosphate from thiamine: step 1/1. Catalyzes the phosphorylation of thiamine to thiamine pyrophosphate (TPP). TPP is an active cofactor for enzymes involved in glycolysis and energy production. Plant leaves require high levels of TPP for photosynthesis and carbohydrate metabolism. The sequence is that of Thiamine pyrophosphokinase 1 (TPK1) from Oryza sativa subsp. japonica (Rice).